Reading from the N-terminus, the 261-residue chain is MSVISMKQLLEAGVHFGHQTRRWNPKMKPFIFTERNGIYIIDLQKTVKLIDNAYNFVKDVAANDGVVLFVGTKKQAQTAIEEEAKRAGQFYVNHRWLGGTLTNWNTIQKRIKRLKDLKKMEEDGTFDRLPKKEVALLNKQKDKLEKFLGGIEDMPHIPDVLFVVDPRKEQIAIKEAQKLNIPVVAMVDTNTDPDQVDVIIPSNDDAIRAVRLITSKMADAVVEGRQGEDDEAVQQEEVAEGVSKDSLEDLKKTVEEGSNEE.

The tract at residues 224 to 261 is disordered; sequence GRQGEDDEAVQQEEVAEGVSKDSLEDLKKTVEEGSNEE. Acidic residues predominate over residues 228–239; the sequence is EDDEAVQQEEVA. Residues 242-255 show a composition bias toward basic and acidic residues; the sequence is VSKDSLEDLKKTVE.

The protein belongs to the universal ribosomal protein uS2 family.

The chain is Small ribosomal subunit protein uS2 (rpsB) from Pediococcus acidilactici.